The sequence spans 349 residues: tRNA pseudouridine synthase D (349 aa).

F27 contacts substrate. Residue D80 is the Nucleophile of the active site. Substrate is bound at residue N129. One can recognise a TRUD domain in the interval 155-303 (GVPNYFGAQR…VEAARRAMLL (149 aa)). Position 329 (F329) interacts with substrate.

This sequence belongs to the pseudouridine synthase TruD family.

It catalyses the reaction uridine(13) in tRNA = pseudouridine(13) in tRNA. Responsible for synthesis of pseudouridine from uracil-13 in transfer RNAs. In Escherichia coli O6:H1 (strain CFT073 / ATCC 700928 / UPEC), this protein is tRNA pseudouridine synthase D.